The sequence spans 349 residues: UDP-3-O-acylglucosamine N-acyltransferase (349 aa).

The Proton acceptor role is filled by H246.

This sequence belongs to the transferase hexapeptide repeat family. LpxD subfamily. In terms of assembly, homotrimer.

The enzyme catalyses a UDP-3-O-[(3R)-3-hydroxyacyl]-alpha-D-glucosamine + a (3R)-hydroxyacyl-[ACP] = a UDP-2-N,3-O-bis[(3R)-3-hydroxyacyl]-alpha-D-glucosamine + holo-[ACP] + H(+). Its pathway is bacterial outer membrane biogenesis; LPS lipid A biosynthesis. Its function is as follows. Catalyzes the N-acylation of UDP-3-O-acylglucosamine using 3-hydroxyacyl-ACP as the acyl donor. Is involved in the biosynthesis of lipid A, a phosphorylated glycolipid that anchors the lipopolysaccharide to the outer membrane of the cell. In Nostoc sp. (strain PCC 7120 / SAG 25.82 / UTEX 2576), this protein is UDP-3-O-acylglucosamine N-acyltransferase.